Here is a 196-residue protein sequence, read N- to C-terminus: Penicillin-binding protein activator LpoB (196 aa).

The first 16 residues, M1–G16, serve as a signal peptide directing secretion. C17 carries N-palmitoyl cysteine lipidation. Residue C17 is the site of S-diacylglycerol cysteine attachment. Positions T24–P54 are disordered. Residues V34 to P43 are compositionally biased toward pro residues.

Belongs to the LpoB family. Interacts with PBP1b.

The protein resides in the cell outer membrane. Its function is as follows. Regulator of peptidoglycan synthesis that is essential for the function of penicillin-binding protein 1B (PBP1b). The protein is Penicillin-binding protein activator LpoB of Dickeya dadantii (strain 3937) (Erwinia chrysanthemi (strain 3937)).